An 81-amino-acid chain; its full sequence is U-megalopygitoxin(3)-Mo4 (81 aa).

Positions 1–20 (MNSKFVLIVVFLAVVSICFA) are cleaved as a signal peptide.

The protein belongs to the caterpillar 3 family. Contains 3 disulfide bonds. As to expression, expressed by the venom apparatus.

The protein localises to the secreted. In terms of biological role, probable toxin. The sequence is that of U-megalopygitoxin(3)-Mo4 from Megalopyge opercularis (Southern flannel moth).